We begin with the raw amino-acid sequence, 314 residues long: MKHLLSIADLTRESAVELLDEAERFEQALLGREVRKLPTLRGRTVMTVFFENSTRTRVSFEVAGKWMSADVINVSASSSSVSKGESLRDTAMTLRAAGADALIVRHPASGAAHQIASWTGRQDDGGPAVINAGDGTHEHPTQALLDALTLRQRLGDIEGKRIAIVGDILHSRVARSNALLLSMLGAEVVLVAPPTLLPVGVSSWPVSVAHSLDAELPGLDAVLMLRVQAERMNGGFFPSQREYSINYGLSEKRLALLPEHAVVLHPGPMLRGMEIASAVADSTRTAVLQQVTNGVHMRMAVLFRLLVGAEDVAG.

Residues arginine 55 and threonine 56 each coordinate carbamoyl phosphate. Lysine 83 lines the L-aspartate pocket. Positions 105, 139, and 142 each coordinate carbamoyl phosphate. The L-aspartate site is built by arginine 172 and arginine 226. Carbamoyl phosphate contacts are provided by glycine 267 and proline 268.

The protein belongs to the aspartate/ornithine carbamoyltransferase superfamily. ATCase family. As to quaternary structure, heterododecamer (2C3:3R2) of six catalytic PyrB chains organized as two trimers (C3), and six regulatory PyrI chains organized as three dimers (R2).

It carries out the reaction carbamoyl phosphate + L-aspartate = N-carbamoyl-L-aspartate + phosphate + H(+). The protein operates within pyrimidine metabolism; UMP biosynthesis via de novo pathway; (S)-dihydroorotate from bicarbonate: step 2/3. Its function is as follows. Catalyzes the condensation of carbamoyl phosphate and aspartate to form carbamoyl aspartate and inorganic phosphate, the committed step in the de novo pyrimidine nucleotide biosynthesis pathway. This chain is Aspartate carbamoyltransferase catalytic subunit, found in Rhodococcus opacus (strain B4).